We begin with the raw amino-acid sequence, 103 residues long: Small ribosomal subunit protein uS10 (103 aa).

It belongs to the universal ribosomal protein uS10 family. In terms of assembly, part of the 30S ribosomal subunit.

Its function is as follows. Involved in the binding of tRNA to the ribosomes. The protein is Small ribosomal subunit protein uS10 of Ruthia magnifica subsp. Calyptogena magnifica.